Consider the following 249-residue polypeptide: DNA repair protein RecO (249 aa).

It belongs to the RecO family.

Involved in DNA repair and RecF pathway recombination. The polypeptide is DNA repair protein RecO (Rhodopseudomonas palustris (strain HaA2)).